The chain runs to 190 residues: Lipid A 1-phosphatase (190 aa).

A run of 5 helical transmembrane segments spans residues 22–42 (LLAL…PKVP), 60–80 (FIPT…VGLF), 117–137 (GNFN…AFLM), 145–162 (YFWL…RIYL), and 164–184 (MHTI…VSLF).

It belongs to the lipid A LpxE 1-phosphatase family. The cofactor is Does not require divalent cations..

It localises to the cell inner membrane. Its pathway is bacterial outer membrane biogenesis; LPS lipid A biosynthesis. In terms of biological role, removes the 1-phosphate group from tetra- and probably hexaacylated lipid A species, has no requirement for the Kdo moiety of lipid A. Has no 4'-phosphatase activity. Has no activity on phospholipids (phosphatidylglycerol, phosphatidylethanolamine or cardiolipin). This enzyme has to act before EptA can attach phosphoethanolamine to the 1-position of lipid A. Absence of the 1-phosphate group renders the bacteria partially resistant to host-derived cationic antimicrobial peptides (CAMP), allowing it to camouflage itself from the host innate immune response, and plays a role in the long-term colonization of the host's stomach. This is Lipid A 1-phosphatase from Helicobacter pylori (strain ATCC 700392 / 26695) (Campylobacter pylori).